Consider the following 505-residue polypeptide: Calcium/calmodulin-dependent protein kinase kinase 1 (505 aa).

Positions histidine 27–proline 66 are disordered. Serine 67 and serine 74 each carry phosphoserine. Position 78 is an asymmetric dimethylarginine (arginine 78). Phosphoserine is present on serine 100. Threonine 108 is subject to Phosphothreonine. Residues tyrosine 128–valine 409 enclose the Protein kinase domain. ATP is bound by residues isoleucine 134 to valine 142 and lysine 157. The interval glutamine 167 to glutamine 189 is RP domain. Aspartate 275 (proton acceptor) is an active-site residue. The segment at lysine 435–leucine 440 is autoinhibitory domain. Residues valine 438–phenylalanine 463 are calmodulin-binding. Phosphoserine is present on residues serine 458, serine 475, and serine 492. A disordered region spans residues glycine 460–serine 505.

Belongs to the protein kinase superfamily. Ser/Thr protein kinase family. As to quaternary structure, interacts with CAMK4 and calmodulin. In terms of processing, appears to be autophosphorylated. Phosphorylated at multiple sites by PRCAKA/PKA. Phosphorylation of Ser-458 is blocked upon binding to Ca(2+)/calmodulin. May be phosphorylated by CAMK1 and CAMK4. As to expression, mostly expressed in the brain with higher levels in cortex and hippocampus. Lower expression levels were detected in striatum, nucleus accumbens and cerebellum (at protein level). Abundant in forebrain, weaker in cerebellum and also detected in thymus and spleen.

The protein localises to the cytoplasm. Its subcellular location is the nucleus. The catalysed reaction is L-seryl-[protein] + ATP = O-phospho-L-seryl-[protein] + ADP + H(+). It catalyses the reaction L-threonyl-[protein] + ATP = O-phospho-L-threonyl-[protein] + ADP + H(+). Activated by Ca(2+)/calmodulin. Binding of calmodulin may relieve intrasteric autoinhibition. Partially inhibited upon phosphorylation by PRCAKA/PKA. May be regulated through phosphorylation by CAMK1 and CAMK4. Calcium/calmodulin-dependent protein kinase that belongs to a proposed calcium-triggered signaling cascade involved in a number of cellular processes. Phosphorylates CAMK1, CAMK1D, CAMK1G and CAMK4. Involved in regulating cell apoptosis. Promotes cell survival by phosphorylating AKT1/PKB that inhibits pro-apoptotic BAD/Bcl2-antagonist of cell death. The polypeptide is Calcium/calmodulin-dependent protein kinase kinase 1 (Camkk1) (Rattus norvegicus (Rat)).